The sequence spans 431 residues: Glutamate--tRNA ligase 1 (431 aa).

The 'HIGH' region motif lies at 6–16 (PSPTGDMHIGN). Residues 235–239 (KMSKR) carry the 'KMSKS' region motif. Lys238 contributes to the ATP binding site.

Belongs to the class-I aminoacyl-tRNA synthetase family. Glutamate--tRNA ligase type 1 subfamily. As to quaternary structure, monomer.

It localises to the cytoplasm. It carries out the reaction tRNA(Glu) + L-glutamate + ATP = L-glutamyl-tRNA(Glu) + AMP + diphosphate. Its function is as follows. Catalyzes the attachment of glutamate to tRNA(Glu) in a two-step reaction: glutamate is first activated by ATP to form Glu-AMP and then transferred to the acceptor end of tRNA(Glu). The chain is Glutamate--tRNA ligase 1 from Campylobacter jejuni subsp. jejuni serotype O:2 (strain ATCC 700819 / NCTC 11168).